We begin with the raw amino-acid sequence, 296 residues long: Cbb3-type cytochrome c oxidase subunit CcoP (296 aa).

The Cytoplasmic portion of the chain corresponds to 1–31 (MAQNYKDELSGVETTGHEWDGLRELNNPLPK). A helical membrane pass occupies residues 32-52 (WWLYLFYVCIAWAMVYYVFYP). Topologically, residues 53–296 (AWPLGKTYTK…VYVHNLGGGK (244 aa)) are periplasmic. 2 consecutive Cytochrome c domains span residues 108–200 (FAMA…LSLN) and 207–293 (GKVA…HNLG). Residues Cys121, Cys124, His125, Met175, Cys220, Cys223, His224, and Met270 each coordinate heme c.

It belongs to the CcoP / FixP family. Component of the cbb3-type cytochrome c oxidase at least composed of CcoN, CcoO, CcoQ and CcoP. Heme c serves as cofactor.

It localises to the cell inner membrane. The protein operates within energy metabolism; oxidative phosphorylation. In terms of biological role, C-type cytochrome. Part of the cbb3-type cytochrome c oxidase complex. CcoP subunit is required for transferring electrons from donor cytochrome c via its heme groups to CcoO subunit. From there, electrons are shuttled to the catalytic binuclear center of CcoN subunit where oxygen reduction takes place. The complex also functions as a proton pump. This Azospirillum sp. (strain B510) protein is Cbb3-type cytochrome c oxidase subunit CcoP.